The sequence spans 264 residues: Tetraspanin-12 (264 aa).

Over 1–13 the chain is Cytoplasmic; it reads MLRLSNAAVITTN. The helical transmembrane segment at 14-34 threads the bilayer; that stretch reads AILALIGLAALSFSVYVYVQG. Over 35-45 the chain is Extracellular; sequence PSQCQRFVQNP. The helical transmembrane segment at 46-66 threads the bilayer; it reads LIVTAALLFFISSLGLIAALY. The Cytoplasmic segment spans residues 67–75; the sequence is GSHIIITLY. Residues 76–96 traverse the membrane as a helical segment; that stretch reads LFFLFLSILLLLVLSVFIFLV. Residues 97–228 are Extracellular-facing; that stretch reads TNPTAGKALS…VLKGIRKRWR (132 aa). An N-linked (GlcNAc...) asparagine glycan is attached at asparagine 180. Residues 229-249 form a helical membrane-spanning segment; that stretch reads ILIVVNLLLILLVVFLYSCGC. Residues 250–264 lie on the Cytoplasmic side of the membrane; it reads CVRKNNRVPWKRRFF.

The protein belongs to the tetraspanin (TM4SF) family.

It is found in the membrane. Its function is as follows. May be involved in the regulation of cell differentiation. The chain is Tetraspanin-12 (TET12) from Arabidopsis thaliana (Mouse-ear cress).